The sequence spans 181 residues: Nucleoside triphosphate/diphosphate phosphatase (181 aa).

Arg26 functions as the Proton donor in the catalytic mechanism. Mg(2+) is bound by residues Asn90, Asp106, Asp108, Asp110, Asp123, and Glu126.

The protein belongs to the Ntdp family. It depends on Mg(2+) as a cofactor.

It catalyses the reaction a ribonucleoside 5'-triphosphate + H2O = a ribonucleoside 5'-diphosphate + phosphate + H(+). The catalysed reaction is a ribonucleoside 5'-diphosphate + H2O = a ribonucleoside 5'-phosphate + phosphate + H(+). In terms of biological role, has nucleoside phosphatase activity towards nucleoside triphosphates and nucleoside diphosphates. The chain is Nucleoside triphosphate/diphosphate phosphatase from Ligilactobacillus salivarius (strain UCC118) (Lactobacillus salivarius).